The chain runs to 453 residues: Allantoinase (453 aa).

H59, H61, K146, H186, H242, and D315 together coordinate Zn(2+). Residue K146 is modified to N6-carboxylysine.

This sequence belongs to the metallo-dependent hydrolases superfamily. Allantoinase family. In terms of assembly, homotetramer. The cofactor is Zn(2+). Post-translationally, carboxylation allows a single lysine to coordinate two zinc ions.

The catalysed reaction is (S)-allantoin + H2O = allantoate + H(+). The protein operates within nitrogen metabolism; (S)-allantoin degradation; allantoate from (S)-allantoin: step 1/1. Catalyzes the conversion of allantoin (5-ureidohydantoin) to allantoic acid by hydrolytic cleavage of the five-member hydantoin ring. The sequence is that of Allantoinase from Salmonella choleraesuis (strain SC-B67).